An 855-amino-acid polypeptide reads, in one-letter code: E3 ubiquitin-protein ligase TRIM71 (855 aa).

Ala-2 is subject to N-acetylalanine. Residues 12 to 94 (CLLCKEMCGS…ALKLRCPVCD (83 aa)) form an RING-type zinc finger. The segment covering 26-42 (SSNSSASSSSSQTSTSS) has biased composition (low complexity). Disordered regions lie at residues 26 to 48 (SSNS…GGGP) and 127 to 177 (EEPP…SPGS). Residues 135 to 145 (RAGGGPGGAGG) show a composition bias toward gly residues. Residues 147–157 (SNHRHHAHHPA) are compositionally biased toward basic residues. The segment at 181–228 (RRPHGCSSCDEGNAASSRCLDCQEHLCDNCVRAHQRVRLTKDHYIERG) adopts a B box-type 1; atypical zinc-finger fold. The B box-type 2 zinc-finger motif lies at 260-301 (ERLGFCQHHDDEVLHLYCDTCSVPICRECTLGRHGGHSFAYL). Zn(2+)-binding residues include Cys-265, His-268, Cys-288, and His-293. Coiled-coil stretches lie at residues 314–352 (QLLA…SEVK) and 378–411 (QVKA…VLEE). Residues 466–567 (SSGAFAPLTK…IENSPFKVVV (102 aa)) form a Filamin repeat. NHL repeat units follow at residues 580–623 (GLSF…FKPC), 627–670 (HHKF…FTFE), 674–717 (LLKF…FGPD), 721–764 (LNKY…IHPD), 768–811 (ARFL…FEAN), and 815–855 (LCKF…ILIF).

This sequence belongs to the TRIM/RBCC family. Interacts (via NHL repeats) with AGO2; the interaction increases in presence of RNA. Interacts with HSP90AA1. Interacts (via NHL repeats) with MOV10, PABPC1, PUM1, PUM2, STAU2, XRN1 and XRN2 in an RNA-dependent manner. Interacts with SHCBP1; leading to enhance its stability. Autoubiquitinated. As to expression, highly expressed in undifferentiated embryonic stem cells (ESCs). Expressed in the epiblast and in interfollicular epidermal stem cells during early development. Also expressed in male germ cells and in the reproductive tract. Highly expressed in neuroepithelial cells, and its expression declines as neurogenesis proceeds (at protein level). Expressed in ependymal cells of the brain.

It localises to the cytoplasm. The protein resides in the P-body. It carries out the reaction S-ubiquitinyl-[E2 ubiquitin-conjugating enzyme]-L-cysteine + [acceptor protein]-L-lysine = [E2 ubiquitin-conjugating enzyme]-L-cysteine + N(6)-ubiquitinyl-[acceptor protein]-L-lysine.. The protein operates within protein modification; protein ubiquitination. Its function is as follows. E3 ubiquitin-protein ligase that cooperates with the microRNAs (miRNAs) machinery and promotes embryonic stem cells proliferation and maintenance. Binds to miRNAs and associates with AGO2, participating in post-transcriptional repression of transcripts such as CDKN1A. Facilitates the G1-S transition to promote rapid embryonic stem cell self-renewal by repressing CDKN1A expression. In addition, participates in post-transcriptional mRNA repression in a miRNA independent mechanism. Required to maintain proliferation and prevent premature differentiation of neural progenitor cells during early neural development: positively regulates FGF signaling by controlling the stability of SHCBP1. Specific regulator of miRNA biogenesis. miRNA Binds MIR29A hairpin and postranscriptionally modulates MIR29A levels, which indirectly regulates TET proteins expression. This is E3 ubiquitin-protein ligase TRIM71 (Trim71) from Mus musculus (Mouse).